We begin with the raw amino-acid sequence, 500 residues long: Maturase K (500 aa).

The protein belongs to the intron maturase 2 family. MatK subfamily.

Its subcellular location is the plastid. The protein localises to the chloroplast. Its function is as follows. Usually encoded in the trnK tRNA gene intron. Probably assists in splicing its own and other chloroplast group II introns. This Argentina anserina (Silverweed cinquefoil) protein is Maturase K.